The chain runs to 224 residues: Perchlorate reductase assembly chaperone protein (224 aa).

This sequence belongs to the type II DMSO reductase enzyme chaperone family.

It is found in the cytoplasm. In terms of biological role, may function as a system-specific molybdenum chaperone protein essential for the assembly of the perchlorate reductase PcrAB complex prior to its periplasmic translocation via the Tat pathway. The chain is Perchlorate reductase assembly chaperone protein (pcrD) from Dechloromonas aromatica (strain RCB).